We begin with the raw amino-acid sequence, 287 residues long: Inorganic pyrophosphatase (287 aa).

Arg-80 contacts diphosphate. Residues Asp-117, Asp-122, and Asp-154 each contribute to the Mg(2+) site.

The protein belongs to the PPase family. It depends on Mg(2+) as a cofactor.

The protein resides in the cytoplasm. It carries out the reaction diphosphate + H2O = 2 phosphate + H(+). This chain is Inorganic pyrophosphatase (IPP1), found in Yarrowia lipolytica (strain CLIB 122 / E 150) (Yeast).